A 149-amino-acid chain; its full sequence is MAADGLSSKALKVKRELGENTPLLSDEELMGLSVRELNHHLRGLSKEEVARLKQRRRTLKNRGYAASCRVKRVCQKEELQKQKMELEWEVDKLARENAAMRLELDTLRGKYEALQGFARTVAAHGPPAKVATASVITIVKSGANQAAYS.

The segment at 51-76 (RLKQRRRTLKNRGYAASCRVKRVCQK) is basic motif. Residues 51-114 (RLKQRRRTLK…DTLRGKYEAL (64 aa)) enclose the bZIP domain. The tract at residues 79 to 93 (LQKQKMELEWEVDKL) is leucine-zipper.

Belongs to the bZIP family. Maf subfamily. As to quaternary structure, monomer and homo- or heterodimer. As to expression, highly expressed in the ovary, lower expression in the brain, heart and mesenterium.

The protein resides in the nucleus. Since it lacks a putative transactivation domain, it may behave as a transcriptional repressor when it dimerizes among itself. May also serve as a transcriptional activator by dimerizing with other (usually larger) basic-zipper proteins and recruiting them to specific DNA-binding sites. May be involved in the cellular stress response. The sequence is that of Transcription factor MafF (MAFF) from Gallus gallus (Chicken).